The sequence spans 312 residues: NADH-ubiquinone oxidoreductase chain 1 (312 aa).

8 helical membrane passes run F3 to F23, I77 to V97, L104 to G124, L150 to F170, I174 to L194, L226 to F246, D250 to A270, and C289 to F309.

This sequence belongs to the complex I subunit 1 family.

It localises to the mitochondrion inner membrane. It carries out the reaction a ubiquinone + NADH + 5 H(+)(in) = a ubiquinol + NAD(+) + 4 H(+)(out). Functionally, core subunit of the mitochondrial membrane respiratory chain NADH dehydrogenase (Complex I) that is believed to belong to the minimal assembly required for catalysis. Complex I functions in the transfer of electrons from NADH to the respiratory chain. The immediate electron acceptor for the enzyme is believed to be ubiquinone. This is NADH-ubiquinone oxidoreductase chain 1 (mt:ND1) from Drosophila subobscura (Fruit fly).